We begin with the raw amino-acid sequence, 513 residues long: Bifunctional purine biosynthesis protein PurH (513 aa).

An MGS-like domain is found at 1–145 (MTKKAIISVY…KNFKYITVII (145 aa)).

Belongs to the PurH family.

The enzyme catalyses (6R)-10-formyltetrahydrofolate + 5-amino-1-(5-phospho-beta-D-ribosyl)imidazole-4-carboxamide = 5-formamido-1-(5-phospho-D-ribosyl)imidazole-4-carboxamide + (6S)-5,6,7,8-tetrahydrofolate. It catalyses the reaction IMP + H2O = 5-formamido-1-(5-phospho-D-ribosyl)imidazole-4-carboxamide. The protein operates within purine metabolism; IMP biosynthesis via de novo pathway; 5-formamido-1-(5-phospho-D-ribosyl)imidazole-4-carboxamide from 5-amino-1-(5-phospho-D-ribosyl)imidazole-4-carboxamide (10-formyl THF route): step 1/1. It participates in purine metabolism; IMP biosynthesis via de novo pathway; IMP from 5-formamido-1-(5-phospho-D-ribosyl)imidazole-4-carboxamide: step 1/1. The polypeptide is Bifunctional purine biosynthesis protein PurH (Caldicellulosiruptor saccharolyticus (strain ATCC 43494 / DSM 8903 / Tp8T 6331)).